Consider the following 400-residue polypeptide: Argininosuccinate synthase (400 aa).

ATP contacts are provided by residues 10-18 (AYSGGVDTS) and A38. Position 89 (Y89) interacts with L-citrulline. Residue G119 coordinates ATP. The L-aspartate site is built by T121, N125, and D126. N125 is an L-citrulline binding site. L-citrulline contacts are provided by R129, S177, S186, E262, and Y274.

Belongs to the argininosuccinate synthase family. Type 1 subfamily. In terms of assembly, homotetramer.

The protein resides in the cytoplasm. The enzyme catalyses L-citrulline + L-aspartate + ATP = 2-(N(omega)-L-arginino)succinate + AMP + diphosphate + H(+). It participates in amino-acid biosynthesis; L-arginine biosynthesis; L-arginine from L-ornithine and carbamoyl phosphate: step 2/3. This is Argininosuccinate synthase from Crocosphaera subtropica (strain ATCC 51142 / BH68) (Cyanothece sp. (strain ATCC 51142)).